A 336-amino-acid polypeptide reads, in one-letter code: USG-1 protein homolog (336 aa).

It belongs to the aspartate-semialdehyde dehydrogenase family.

This Azotobacter vinelandii protein is USG-1 protein homolog (usg).